We begin with the raw amino-acid sequence, 333 residues long: Prenyltransferase stbC (333 aa).

Transmembrane regions (helical) follow at residues 74–94 (VAFQAVLYIGWTFFMRGAGCA), 125–145 (ANIFGFAMVALAFACISPLPA), 147–164 (CQRLGLMTTVLSIIYPFC), 173–193 (VILGMTLAINFILAAYGAGLP), 201–221 (VPTICVTTAITLLVVFYDVVY), 247–267 (ILLTSITLVIAGLIATTGVLV), 272–292 (YFFVFSVAGLLAALLAMIGGI), and 304–324 (SGWFYALAIFNLLGGYLIEYL).

Belongs to the UbiA prenyltransferase family.

The protein resides in the membrane. It carries out the reaction orsellinate + (2E,6E)-farnesyl diphosphate = ilicicolinate B + diphosphate. It functions in the pathway secondary metabolite biosynthesis; terpenoid biosynthesis. Functionally, prenyltransferase; part of the cluster that mediates the biosynthesis of LL-Z1272-beta, also known as ilicicolin B, a prenylated aryl-aldehyde produced by several fungi and that serves as a key pathway intermediate for many fungal meroterpenoids. The first step in the pathway is performed by the non-reducing polyketide synthase stbA that produces orsellinic acid by condensing acetyl-CoA with 3 malonyl-CoA units. The prenyltransferase stbC then prenylates orsenilic acid into grifolic acid. Finally, grifolic acid is reduced to ilicicolin B by the NRPS-like protein stbB. The sequence is that of Prenyltransferase stbC from Stachybotrys bisbyi (Hyalostachybotrys bisbyi).